A 353-amino-acid chain; its full sequence is B1 bradykinin receptor (353 aa).

The Extracellular segment spans residues 1 to 40; it reads MASSWPPLELQSSNQSQLFPQNATACDNAPEAWDLLHRVL. N-linked (GlcNAc...) asparagine glycosylation is found at Asn14 and Asn22. Residues 41-64 traverse the membrane as a helical segment; the sequence is PTFIISICFFGLLGNLFVLLVFLL. At 65–73 the chain is on the cytoplasmic side; sequence PRRQLNVAE. A helical membrane pass occupies residues 74–98; sequence IYLANLAASDLVFVLGLPFWAENIW. At 99–111 the chain is on the extracellular side; sequence NQFNWPFGALLCR. Residues Cys110 and Cys189 are joined by a disulfide bond. A helical transmembrane segment spans residues 112–133; sequence VINGVIKANLFISIFLVVAISQ. At 134-155 the chain is on the cytoplasmic side; the sequence is DRYRVLVHPMASRRQQRRRQAR. Residues 156–178 traverse the membrane as a helical segment; the sequence is VTCVLIWVVGGLLSIPTFLLRSI. Residues 179–199 are Extracellular-facing; the sequence is QAVPDLNITACILLLPHEAWH. N-linked (GlcNAc...) asparagine glycosylation is present at Asn185. Residues 200-226 form a helical membrane-spanning segment; that stretch reads FARIVELNILGFLLPLAAIVFFNYHIL. The Cytoplasmic portion of the chain corresponds to 227-247; the sequence is ASLRTREEVSRTRCGGRKDSK. The helical transmembrane segment at 248 to 272 threads the bilayer; it reads TTALILTLVVAFLVCWAPYHFFAFL. Topologically, residues 273–291 are extracellular; that stretch reads EFLFQVQAVRGCFWEDFID. Residues 292–314 traverse the membrane as a helical segment; sequence LGLQLANFFAFTNSSLNPVIYVF. Residues 315–353 are Cytoplasmic-facing; the sequence is VGRLFRTKVWELYKQCTPKSLAPISSSHRKEIFQLFWRN. The S-palmitoyl cysteine moiety is linked to residue Cys330.

Belongs to the G-protein coupled receptor 1 family. Bradykinin receptor subfamily. BDKRB1 sub-subfamily.

It is found in the cell membrane. Its function is as follows. This is a receptor for bradykinin. Could be a factor in chronic pain and inflammation. This is B1 bradykinin receptor (BDKRB1) from Homo sapiens (Human).